The primary structure comprises 261 residues: Acetylglutamate kinase (261 aa).

Substrate contacts are provided by residues 45 to 46 (GG), arginine 67, and asparagine 162.

It belongs to the acetylglutamate kinase family. ArgB subfamily.

The protein localises to the cytoplasm. The enzyme catalyses N-acetyl-L-glutamate + ATP = N-acetyl-L-glutamyl 5-phosphate + ADP. It functions in the pathway amino-acid biosynthesis; L-arginine biosynthesis; N(2)-acetyl-L-ornithine from L-glutamate: step 2/4. Catalyzes the ATP-dependent phosphorylation of N-acetyl-L-glutamate. This chain is Acetylglutamate kinase, found in Bacteroides fragilis (strain ATCC 25285 / DSM 2151 / CCUG 4856 / JCM 11019 / LMG 10263 / NCTC 9343 / Onslow / VPI 2553 / EN-2).